The chain runs to 377 residues: Guanine nucleotide-binding protein subunit beta (377 aa).

WD repeat units lie at residues 63–93 (GHTG…IVWN), 105–135 (LPCA…SIFN), 154–185 (GHKG…VLWD), 202–233 (GHTA…RLWD), 246–276 (CHEG…RLFD), 293–323 (GDIP…YVWD), and 339–369 (SHEG…KIWA).

It belongs to the WD repeat G protein beta family. As to quaternary structure, g proteins are composed of 3 units, alpha, beta and gamma.

Its subcellular location is the cell membrane. It localises to the endoplasmic reticulum membrane. Guanine nucleotide-binding proteins (G proteins) are involved as a modulator or transducer in various transmembrane signaling systems. The beta and gamma chains are required for the GTPase activity, for replacement of GDP by GTP, and for G protein-effector interaction. This is Guanine nucleotide-binding protein subunit beta from Nicotiana plumbaginifolia (Leadwort-leaved tobacco).